The chain runs to 244 residues: Flavin-dependent thymidylate synthase (244 aa).

The ThyX domain occupies Ile-17–Gln-239. Residues Ser-68, Arg-91–Arg-93, and Glu-99 contribute to the FAD site. DUMP is bound by residues Glu-88–Arg-91, Glu-99–Arg-103, and Arg-171. The ThyX motif signature appears at Arg-91–Ser-101. Residues Asn-187 to Arg-189 and Asn-193 each bind FAD. Arg-198 is a binding site for dUMP. The Involved in ionization of N3 of dUMP, leading to its activation role is filled by Arg-198.

Belongs to the thymidylate synthase ThyX family. Homotetramer. The cofactor is FAD.

It catalyses the reaction dUMP + (6R)-5,10-methylene-5,6,7,8-tetrahydrofolate + NADPH + H(+) = dTMP + (6S)-5,6,7,8-tetrahydrofolate + NADP(+). It participates in pyrimidine metabolism; dTTP biosynthesis. Catalyzes the reductive methylation of 2'-deoxyuridine-5'-monophosphate (dUMP) to 2'-deoxythymidine-5'-monophosphate (dTMP) while utilizing 5,10-methylenetetrahydrofolate (mTHF) as the methyl donor, and NADPH and FADH(2) as the reductant. The polypeptide is Flavin-dependent thymidylate synthase (Tropheryma whipplei (strain Twist) (Whipple's bacillus)).